Reading from the N-terminus, the 132-residue chain is Large ribosomal subunit protein uL14 (132 aa).

It belongs to the universal ribosomal protein uL14 family. Part of the 50S ribosomal subunit. Forms a cluster with proteins L3 and L24e, part of which may contact the 16S rRNA in 2 intersubunit bridges.

Binds to 23S rRNA. Forms part of two intersubunit bridges in the 70S ribosome. The polypeptide is Large ribosomal subunit protein uL14 (Methanococcus vannielii).